The chain runs to 271 residues: 5-deoxy-glucuronate isomerase (271 aa).

Belongs to the isomerase IolB family.

The enzyme catalyses 5-deoxy-D-glucuronate = 5-dehydro-2-deoxy-D-gluconate. It participates in polyol metabolism; myo-inositol degradation into acetyl-CoA; acetyl-CoA from myo-inositol: step 4/7. Involved in the isomerization of 5-deoxy-glucuronate (5DG) to 5-dehydro-2-deoxy-D-gluconate (DKG or 2-deoxy-5-keto-D-gluconate). This is 5-deoxy-glucuronate isomerase from Bacillus subtilis subsp. natto.